The following is a 360-amino-acid chain: Photosystem II protein D1 (360 aa).

Helical transmembrane passes span 30–47 (YVGW…AATT), 119–134 (HFLI…QWEL), and 143–157 (WICV…AAFA). His119 is a binding site for chlorophyll a. Position 127 (Tyr127) interacts with pheophytin a. [CaMn4O5] cluster-binding residues include Asp171 and Glu190. The helical transmembrane segment at 198 to 219 (FHMAGVAGMFGGALFSAMHGSL) threads the bilayer. Residue His199 coordinates chlorophyll a. Residues His216 and 265 to 266 (SF) contribute to the a quinone site. His216 serves as a coordination point for Fe cation. His273 provides a ligand contact to Fe cation. A helical transmembrane segment spans residues 275-289 (FLASWPVICVWLTSM). His333, Glu334, Asp343, and Ala345 together coordinate [CaMn4O5] cluster. Residues 346–360 (AAESTSVALVAPAIG) constitute a propeptide that is removed on maturation.

It belongs to the reaction center PufL/M/PsbA/D family. As to quaternary structure, PSII is composed of 1 copy each of membrane proteins PsbA, PsbB, PsbC, PsbD, PsbE, PsbF, PsbH, PsbI, PsbJ, PsbK, PsbL, PsbM, PsbT, PsbX, PsbY, Psb30/Ycf12, peripheral proteins PsbO, CyanoQ (PsbQ), PsbU, PsbV and a large number of cofactors. It forms dimeric complexes. The D1/D2 heterodimer binds P680, chlorophylls that are the primary electron donor of PSII, and subsequent electron acceptors. It shares a non-heme iron and each subunit binds pheophytin, quinone, additional chlorophylls, carotenoids and lipids. D1 provides most of the ligands for the Mn4-Ca-O5 cluster of the oxygen-evolving complex (OEC). There is also a Cl(-1) ion associated with D1 and D2, which is required for oxygen evolution. The PSII complex binds additional chlorophylls, carotenoids and specific lipids. is required as a cofactor. Tyr-162 forms a radical intermediate that is referred to as redox-active TyrZ, YZ or Y-Z. In terms of processing, C-terminally processed by CtpA; processing is essential to allow assembly of the oxygen-evolving complex and thus photosynthetic growth.

It localises to the cellular thylakoid membrane. The enzyme catalyses 2 a plastoquinone + 4 hnu + 2 H2O = 2 a plastoquinol + O2. Functionally, photosystem II (PSII) is a light-driven water:plastoquinone oxidoreductase that uses light energy to abstract electrons from H(2)O, generating O(2) and a proton gradient subsequently used for ATP formation. It consists of a core antenna complex that captures photons, and an electron transfer chain that converts photonic excitation into a charge separation. The D1/D2 (PsbA/PsbD) reaction center heterodimer binds P680, the primary electron donor of PSII as well as several subsequent electron acceptors. This Prochlorococcus marinus (strain NATL1A) protein is Photosystem II protein D1.